The sequence spans 123 residues: Small ribosomal subunit protein uS12 (123 aa).

Positions 1–32 are disordered; it reads MPTIQQLVRKGRTDKISKNKTPALKGSPQRRG. The residue at position 89 (Asp89) is a 3-methylthioaspartic acid. The disordered stretch occupies residues 103-123; it reads DTQGVKGRKQARSRYGAKKEK. A compositionally biased stretch (basic residues) spans 108–123; sequence KGRKQARSRYGAKKEK.

This sequence belongs to the universal ribosomal protein uS12 family. In terms of assembly, part of the 30S ribosomal subunit. Contacts proteins S8 and S17. May interact with IF1 in the 30S initiation complex.

With S4 and S5 plays an important role in translational accuracy. In terms of biological role, interacts with and stabilizes bases of the 16S rRNA that are involved in tRNA selection in the A site and with the mRNA backbone. Located at the interface of the 30S and 50S subunits, it traverses the body of the 30S subunit contacting proteins on the other side and probably holding the rRNA structure together. The combined cluster of proteins S8, S12 and S17 appears to hold together the shoulder and platform of the 30S subunit. This chain is Small ribosomal subunit protein uS12, found in Cutibacterium acnes (strain DSM 16379 / KPA171202) (Propionibacterium acnes).